We begin with the raw amino-acid sequence, 556 residues long: MSILNPRTSLEAGDSDDACCAAMASACCLNTKEDCDSPSTALPSGTPQSLEVEEVQGYDVEFDPPLESKYECPICLMALREAVQTPCGHRFCKACIVKSLRDAGHKCPVDNEILMENQLFPDNFAKREILSLKVKCPSQGCTETMELRHLERHLGQCQFASVECSQCQGSFPKSRLEKHMEHECGRRKIFCDNCGLAMAYEDMSGHELICPLAYVTCEYCQTNLIREQMPSHYSMDCTMAPIPCMYYEFGCTEKMQRNDLARHLQDFTQAHMRMMFQTLRSFSTTPTSHISDISFCDPNQFEPVPLSVAPAHPSHMPSHQDCSQETRNLRETIEQLEGRLVRQDHQIRELIAKMETQCTYVNELKHTIRSLEDKLLDVDGHHCNGVFIWKIKGFSGLQKTQEEEKPVVIHSPGFYTGKPGYKLCLRLHLQLPSAQRCANYISLFVHTMQGEYDSLLPWPLHGTIRLSILDQSEGAIIQDQEEVMDTKPDLLAFQRPTTQRNPKGFGYVTFMHLNTLKQRQYVKNDTLFVRCAVNIHLDVISPRREGFQPRSGDGAQ.

The RING-type; degenerate zinc finger occupies 72-111 (CPICLMALREAVQTPCGHRFCKACIVKSLRDAGHKCPVDN). 2 TRAF-type zinc fingers span residues 152–204 (RHLG…EDMS) and 205–261 (GHEL…NDLA). Positions 318–356 (SHQDCSQETRNLRETIEQLEGRLVRQDHQIRELIAKMET) form a coiled coil. The MATH domain occupies 384-533 (NGVFIWKIKG…NDTLFVRCAV (150 aa)).

It belongs to the TNF receptor-associated factor family. A subfamily. In terms of assembly, homotrimer. Homooligomer.

It is found in the cytoplasm. It localises to the cell cortex. The protein localises to the nucleus. The protein resides in the lipid droplet. It catalyses the reaction S-ubiquitinyl-[E2 ubiquitin-conjugating enzyme]-L-cysteine + [acceptor protein]-L-lysine = [E2 ubiquitin-conjugating enzyme]-L-cysteine + N(6)-ubiquitinyl-[acceptor protein]-L-lysine.. It functions in the pathway protein modification; protein ubiquitination. Functionally, E3 ubiquitin ligase that, together with UBE2N and UBE2V1, mediates the synthesis of 'Lys-63'-linked-polyubiquitin chains conjugated to proteins, such as IKBKG, IRAK1, AKT1 and AKT2. Also mediates ubiquitination of free/unanchored polyubiquitin chain that leads to MAP3K7 activation. The protein is TNF receptor-associated factor 6-B (traf6-b) of Xenopus laevis (African clawed frog).